Here is a 364-residue protein sequence, read N- to C-terminus: MTTSTTTTTNIMLQVSNVTNHTLNSTEIYQLFEYTRFGVWLMCIVGTFLNMLVITTILYYRRKKKSPSDTYICNLAVADLLIVVGLPFFLEYAKHHPKLSREVVCSGLNACFYICLFAGVCFLINLSMDRYCVIVWGVELNRVRNNKRATCWVVIFWILAALMGMPHYLMYSHTNNECVGEFANETSGWFPVFLNTKVNICGYLAPIVLMAYTYNRMVRFIINYVGKWHMQTLHVLLVVVVSFASFWFPFNLALFLESIRLLSGTQNETLQTVITFCLYVGQFLAYVRACLNPGIYILVGTQMRKDMWTTLRVFACCCVKQEIPYQDIDIELQKDIQRRAKHTKRTHYDRKHAPMESGEEEFLL.

Residues 1–36 are Virion surface-facing; it reads MTTSTTTTTNIMLQVSNVTNHTLNSTEIYQLFEYTR. Residues asparagine 17, asparagine 20, and asparagine 24 are each glycosylated (N-linked (GlcNAc...) asparagine; by host). Residues 37–57 form a helical membrane-spanning segment; the sequence is FGVWLMCIVGTFLNMLVITTI. At 58–69 the chain is on the intravirion side; the sequence is LYYRRKKKSPSD. A helical transmembrane segment spans residues 70–90; the sequence is TYICNLAVADLLIVVGLPFFL. Residues 91-103 are Virion surface-facing; the sequence is EYAKHHPKLSREV. Residues 104–124 form a helical membrane-spanning segment; it reads VCSGLNACFYICLFAGVCFLI. Residues 125–150 lie on the Intravirion side of the membrane; the sequence is NLSMDRYCVIVWGVELNRVRNNKRAT. A helical membrane pass occupies residues 151-171; that stretch reads CWVVIFWILAALMGMPHYLMY. Residues 172 to 188 lie on the Virion surface side of the membrane; it reads SHTNNECVGEFANETSG. The chain crosses the membrane as a helical span at residues 189–209; sequence WFPVFLNTKVNICGYLAPIVL. Topologically, residues 210–234 are intravirion; the sequence is MAYTYNRMVRFIINYVGKWHMQTLH. A helical transmembrane segment spans residues 235 to 255; the sequence is VLLVVVVSFASFWFPFNLALF. The Virion surface segment spans residues 256–279; it reads LESIRLLSGTQNETLQTVITFCLY. The chain crosses the membrane as a helical span at residues 280–300; sequence VGQFLAYVRACLNPGIYILVG. Residues 301–364 are Intravirion-facing; that stretch reads TQMRKDMWTT…MESGEEEFLL (64 aa). Residues 344-364 are disordered; that stretch reads KRTHYDRKHAPMESGEEEFLL.

Belongs to the G-protein coupled receptor 1 family. As to quaternary structure, heterodimerizes with US28.

Its subcellular location is the virion. It is found in the host cell membrane. Its function is as follows. Plays an important role in spread of HCMV via the extracellular route. As a G-protein-coupled receptor (vGPCR), may activate signaling pathways important for virion assembly or egress processes. This Homo sapiens (Human) protein is Envelope glycoprotein US27 (US27).